A 402-amino-acid polypeptide reads, in one-letter code: Argininosuccinate synthase (402 aa).

9–17 (AYSGGLDTS) contributes to the ATP binding site. L-citrulline is bound at residue Y86. Position 116 (G116) interacts with ATP. L-aspartate-binding residues include T118, N122, and D123. N122 serves as a coordination point for L-citrulline. Residues R126, S174, S183, E259, and Y271 each contribute to the L-citrulline site.

The protein belongs to the argininosuccinate synthase family. Type 1 subfamily. Homotetramer.

Its subcellular location is the cytoplasm. The catalysed reaction is L-citrulline + L-aspartate + ATP = 2-(N(omega)-L-arginino)succinate + AMP + diphosphate + H(+). Its pathway is amino-acid biosynthesis; L-arginine biosynthesis; L-arginine from L-ornithine and carbamoyl phosphate: step 2/3. The protein is Argininosuccinate synthase of Geobacillus sp. (strain WCH70).